The chain runs to 452 residues: Phosphoglucosamine mutase (452 aa).

Catalysis depends on S98, which acts as the Phosphoserine intermediate. S98, D239, D241, and D243 together coordinate Mg(2+). A Phosphoserine modification is found at S98.

Belongs to the phosphohexose mutase family. Requires Mg(2+) as cofactor. Post-translationally, activated by phosphorylation.

The enzyme catalyses alpha-D-glucosamine 1-phosphate = D-glucosamine 6-phosphate. In terms of biological role, catalyzes the conversion of glucosamine-6-phosphate to glucosamine-1-phosphate. The polypeptide is Phosphoglucosamine mutase (Anaplasma marginale (strain St. Maries)).